The chain runs to 459 residues: Vitronectin (459 aa).

A signal peptide spans 1 to 19 (MAPLRPLLMLALLAWVALA). Residues 20-63 (DQESCKGRCTDGFIAERKCQCDELCSYYQSCCTDYVAECKPQVT) form the SMB domain. Intrachain disulfides connect C24-C28, C24-C40, C28-C58, C38-C40, C38-C51, C44-C50, and C51-C58. A Cell attachment site motif is present at residues 64 to 66 (RGD). Sulfotyrosine occurs at positions 75, 78, and 80. N87 and N146 each carry an N-linked (GlcNAc...) asparagine glycan. Hemopexin repeat units follow at residues 135 to 179 (GKPF…VWGI), 180 to 227 (KGPI…FKGI), and 228 to 285 (PDDV…FALM). 2 positions are modified to phosphoserine: S289 and S378. A disordered region spans residues 338–380 (LKPSQPKMTKSARRSGKRYRSRRGRGRGRGHSRSQKSHRQSRS). The span at 347–378 (KSARRSGKRYRSRRGRGRGRGHSRSQKSHRQS) shows a compositional bias: basic residues. Sulfotyrosine is present on residues Y398 and Y401. The stretch at 400 to 453 (DYKMDWLVPATCEPIQSVYFFSGEEYYRVNLRTQRVDTVTPPYPRSIAQYWLGC) is one Hemopexin 4 repeat.

In terms of assembly, monomer. Interacts with SERPINE1/PAI1 and C1QBP. In terms of processing, sulfated on tyrosine residues. N- and O-glycosylated. Post-translationally, it has been suggested that the active SMB domain may be permitted considerable disulfide bond heterogeneity or variability, thus two alternate disulfide patterns based on 3D structures are described with 1 disulfide bond conserved in both. Plasma.

Its subcellular location is the secreted. The protein localises to the extracellular space. Its function is as follows. Vitronectin is a cell adhesion and spreading factor found in serum and tissues. Vitronectin interact with glycosaminoglycans and proteoglycans. Is recognized by certain members of the integrin family and serves as a cell-to-substrate adhesion molecule. Inhibitor of the membrane-damaging effect of the terminal cytolytic complement pathway. The protein is Vitronectin (VTN) of Sus scrofa (Pig).